The sequence spans 301 residues: Heat shock factor protein HSF24 (301 aa).

A DNA-binding region spans residues 7 to 101; the sequence is PAPFLLKTYQ…LLTAIRRRKT (95 aa). Disordered stretches follow at residues 103–160 and 221–244; these read TSTP…DENE and GVKD…DEKG. A compositionally biased stretch (low complexity) spans 107–142; it reads AGGKSVAAGASASPDNSGDDIGSSSTSSPDSKNPGS. The span at 233–243 shows a compositional bias: acidic residues; sequence DNDDKEDDDEK.

This sequence belongs to the HSF family. As to quaternary structure, homotrimer. Exhibits temperature-dependent phosphorylation.

It localises to the nucleus. Its function is as follows. DNA-binding protein that specifically binds heat shock promoter elements (HSE) and activates transcription. This Solanum peruvianum (Peruvian tomato) protein is Heat shock factor protein HSF24 (HSF24).